A 574-amino-acid chain; its full sequence is Sorting nexin-33 (574 aa).

Residues 1–61 (MALKGRALYD…PASYVEIVRP (61 aa)) form the SH3 domain. Serine 77 is modified (phosphoserine). The segment covering 79–90 (GTQGSLYSSPSM) has biased composition (polar residues). The disordered stretch occupies residues 79 to 116 (GTQGSLYSSPSMASPARSGGGSGFLSNPGSFEDDDDDD). Phosphoserine is present on serine 92. The PX domain maps to 230-340 (FACSIEDPTK…HFLSCLDDKQ (111 aa)). Residues 371–574 (LQDVEDRVDT…EKTLHMYDHL (204 aa)) form the BAR domain.

It belongs to the sorting nexin family. Homodimer (via BAR domain). Interacts with ADAM15. Interacts with FASLG. Interacts (via SH3 domain) with DNM1 and DNM2. Interacts with WASL. Interacts with FCHSD1 (via the F-BAR domain). Post-translationally, phosphorylated. Detected in brain (at protein level).

The protein localises to the cytoplasm. It localises to the cytosol. It is found in the membrane. Its subcellular location is the cytoplasmic vesicle membrane. Its function is as follows. Plays a role in the reorganization of the cytoskeleton, endocytosis and cellular vesicle trafficking via its interactions with membranes, WASL, DNM1 and DNM2. Acts both during interphase and at the end of mitotic cell divisions. Required for efficient progress through mitosis and cytokinesis. Required for normal formation of the cleavage furrow at the end of mitosis. Modulates endocytosis of cell-surface proteins, such as APP and PRNP; this then modulates the secretion of APP and PRNP peptides. Promotes membrane tubulation (in vitro). May promote the formation of macropinosomes. The protein is Sorting nexin-33 (Snx33) of Mus musculus (Mouse).